Reading from the N-terminus, the 270-residue chain is Mlc titration factor A (270 aa).

Residues His111, His148, His152, and Glu211 each coordinate Zn(2+).

It belongs to the MtfA family. In terms of assembly, interacts with Mlc. It depends on Zn(2+) as a cofactor.

It is found in the cytoplasm. Its function is as follows. Involved in the modulation of the activity of the glucose-phosphotransferase system (glucose-PTS). Interacts with the transcriptional repressor Mlc, preventing its interaction with DNA and leading to the modulation of expression of genes regulated by Mlc, including ptsG, which encodes the PTS system glucose-specific EIICB component. Shows zinc-dependent metallopeptidase activity. This chain is Mlc titration factor A, found in Yersinia pestis bv. Antiqua (strain Nepal516).